Here is a 482-residue protein sequence, read N- to C-terminus: Potential E3 ubiquitin-protein ligase ariadne-2 (482 aa).

Residues 125–334 form a TRIAD supradomain region; it reads AKGYCSVCAM…SEYYECSRYK (210 aa). Residues Cys-129, Cys-132, Cys-145, His-147, Cys-150, Cys-153, Cys-172, Cys-177, Cys-218, Cys-223, Cys-239, Cys-242, Cys-247, Cys-250, His-255, Cys-260, Cys-287, and Cys-290 each coordinate Zn(2+). The segment at 129-177 adopts an RING-type 1 zinc-finger fold; it reads CSVCAMDGYTELPHLTCGHCFCEHCWKSHVESRLSEGVASRIECMESEC. Residues 198-260 form an IBR-type zinc finger; that stretch reads LKYERFLLRD…GADYHAPTSC (63 aa). An RING-type 2; atypical zinc finger spans residues 287–316; the sequence is CPQCHSCIEKAGGCNHIQCTRCRHHFCWMC. Cys-300 is a catalytic residue. Cys-305, Cys-308, Cys-313, Cys-316, His-323, and Cys-330 together coordinate Zn(2+). A coiled-coil region spans residues 433 to 459; that stretch reads FEYQQAQLEKEVEELAWAVERADGTAR.

Belongs to the RBR family. Ariadne subfamily.

Its subcellular location is the nucleus. The enzyme catalyses [E2 ubiquitin-conjugating enzyme]-S-ubiquitinyl-L-cysteine + [acceptor protein]-L-lysine = [E2 ubiquitin-conjugating enzyme]-L-cysteine + [acceptor protein]-N(6)-ubiquitinyl-L-lysine.. Functionally, might act as an E3 ubiquitin-protein ligase, or as part of E3 complex, which accepts ubiquitin from specific E2 ubiquitin-conjugating enzymes, such as UBC-2/UBE2L3, and then transfers it to substrates. This is Potential E3 ubiquitin-protein ligase ariadne-2 from Caenorhabditis elegans.